Reading from the N-terminus, the 213-residue chain is Large ribosomal subunit protein mL67 (213 aa).

The protein belongs to the mitochondrion-specific ribosomal protein mL67 family.

Its subcellular location is the nucleus. It localises to the mitochondrion. Transcription factor involved in regulation of RNA polymerase II-dependent transcription. Also involved in regulation of mitochondrial DNA recombination, maintenance and repair, and generation of homoplasmic cells. The protein is Large ribosomal subunit protein mL67 (MHR1) of Eremothecium gossypii (strain ATCC 10895 / CBS 109.51 / FGSC 9923 / NRRL Y-1056) (Yeast).